Consider the following 511-residue polypeptide: U3 snoRNP-associated protein-like YAOH (511 aa).

Positions 1 to 18 are enriched in basic residues; that stretch reads MAPRPRKRVSRPKPRATS. Positions 1 to 117 are disordered; sequence MAPRPRKRVS…EDEDEGEEAG (117 aa). Composition is skewed to acidic residues over residues 44 to 53 and 66 to 80; these read EDIESEDSDL and DDGE…EQET. Residues 81–105 are compositionally biased toward basic and acidic residues; that stretch reads AGEKKMRIAKELLKKVTDAARRRRE. 7 WD repeats span residues 158–197, 217–256, 259–298, 301–339, 342–380, 412–451, and 457–497; these read KHRQ…SEKY, KRSK…HIQA, GHRG…YMNC, GHQN…QLLF, PATA…PTHI, SAQS…KGIR, and RLDG…QNGV.

The protein belongs to the WD repeat RRP9 family.

It is found in the nucleus. The protein localises to the nucleolus. Functionally, component of a nucleolar small nuclear ribonucleoprotein particle (snoRNP) thought to participate in the processing and modification of pre-ribosomal RNA. Essential for embryogenesis. This chain is U3 snoRNP-associated protein-like YAOH, found in Oryza sativa subsp. japonica (Rice).